The sequence spans 177 residues: Ribosome maturation factor RimM (177 aa).

In terms of domain architecture, PRC barrel spans 98–177 (DDGYYWKDLM…TIEVDWDPGF (80 aa)).

This sequence belongs to the RimM family. As to quaternary structure, binds ribosomal protein uS19.

The protein localises to the cytoplasm. In terms of biological role, an accessory protein needed during the final step in the assembly of 30S ribosomal subunit, possibly for assembly of the head region. Essential for efficient processing of 16S rRNA. May be needed both before and after RbfA during the maturation of 16S rRNA. It has affinity for free ribosomal 30S subunits but not for 70S ribosomes. The chain is Ribosome maturation factor RimM from Enterobacter sp. (strain 638).